The chain runs to 484 residues: Cysteine--tRNA ligase (484 aa).

Cys-29 contacts Zn(2+). The 'HIGH' region signature appears at 31 to 41 (PTVQSAPHIGH). Positions 219, 244, and 248 each coordinate Zn(2+). The 'KMSKS' region signature appears at 275–279 (KMSKS). An ATP-binding site is contributed by Lys-278.

Belongs to the class-I aminoacyl-tRNA synthetase family. In terms of assembly, monomer. Requires Zn(2+) as cofactor.

The protein localises to the cytoplasm. The enzyme catalyses tRNA(Cys) + L-cysteine + ATP = L-cysteinyl-tRNA(Cys) + AMP + diphosphate. In Clavibacter michiganensis subsp. michiganensis (strain NCPPB 382), this protein is Cysteine--tRNA ligase.